A 750-amino-acid chain; its full sequence is Photosystem I P700 chlorophyll a apoprotein A1 (750 aa).

Transmembrane regions (helical) follow at residues 70-93 (VFSA…FHGA), 156-179 (LYTT…FHYH), 195-219 (LNHH…HVSL), 291-309 (TAHH…GHMY), 346-369 (WHAQ…HHMY), 385-411 (LSLF…IFMV), 433-455 (AIIS…LYIH), and 531-549 (FLVH…LILL). [4Fe-4S] cluster-binding residues include cysteine 573 and cysteine 582. 2 helical membrane-spanning segments follow: residues 589–610 (HVFL…HFSW) and 664–686 (LSAY…MFLF). Histidine 675 contacts chlorophyll a'. 2 residues coordinate chlorophyll a: methionine 683 and tyrosine 691. Tryptophan 692 lines the phylloquinone pocket. The chain crosses the membrane as a helical span at residues 724–744 (AVGVAHYLLGGIATTWAFFLA).

Belongs to the PsaA/PsaB family. In terms of assembly, the PsaA/B heterodimer binds the P700 chlorophyll special pair and subsequent electron acceptors. PSI consists of a core antenna complex that captures photons, and an electron transfer chain that converts photonic excitation into a charge separation. The eukaryotic PSI reaction center is composed of at least 11 subunits. P700 is a chlorophyll a/chlorophyll a' dimer, A0 is one or more chlorophyll a, A1 is one or both phylloquinones and FX is a shared 4Fe-4S iron-sulfur center. serves as cofactor.

The protein localises to the plastid. It is found in the chloroplast thylakoid membrane. It catalyses the reaction reduced [plastocyanin] + hnu + oxidized [2Fe-2S]-[ferredoxin] = oxidized [plastocyanin] + reduced [2Fe-2S]-[ferredoxin]. PsaA and PsaB bind P700, the primary electron donor of photosystem I (PSI), as well as the electron acceptors A0, A1 and FX. PSI is a plastocyanin-ferredoxin oxidoreductase, converting photonic excitation into a charge separation, which transfers an electron from the donor P700 chlorophyll pair to the spectroscopically characterized acceptors A0, A1, FX, FA and FB in turn. Oxidized P700 is reduced on the lumenal side of the thylakoid membrane by plastocyanin. This Physcomitrium patens (Spreading-leaved earth moss) protein is Photosystem I P700 chlorophyll a apoprotein A1.